The primary structure comprises 214 residues: MGKRIGLFGGTFDPVHIGHMRSAVEMAEQFALDELRLLPNARPPHRETPQVSAAQRLAMVERAVAGVERLTVDPRELQRDKPSYTIDTLESVRAELAADDQLFMLIGWDAFCGLPTWHRWEALLDHCHIVVLQRPDADSEPPESLRDLLAARSVADPQALKGPGGQITFVWQTPLAVSATQIRALLGAGRSVRFLVPDAVLNYIEAHHLYRAPH.

The protein belongs to the NadD family.

The enzyme catalyses nicotinate beta-D-ribonucleotide + ATP + H(+) = deamido-NAD(+) + diphosphate. Its pathway is cofactor biosynthesis; NAD(+) biosynthesis; deamido-NAD(+) from nicotinate D-ribonucleotide: step 1/1. Functionally, catalyzes the reversible adenylation of nicotinate mononucleotide (NaMN) to nicotinic acid adenine dinucleotide (NaAD). This is Probable nicotinate-nucleotide adenylyltransferase from Pseudomonas aeruginosa (strain UCBPP-PA14).